Here is a 296-residue protein sequence, read N- to C-terminus: MFKSGFVTIVGRPNVGKSTLLNAIMKEKLSIVSCRPQTTRNNIQTILTEDNYQLVFVDTPGIHKPKHKLGEYMVKSASDAMKDVDLVLFLINPDEKPGRGDLFIIEQLKEVKVPVFLVLNKIDENPQEKVAETLKTYSELMEFEEIIPISALKGKNIDLLKELMFKYIPEGPQYYPEDMIIDQNERFIVAEIVREKALRLLSEEVPHGIAVEILQMKRNEKGTYHIEGNILCEKNSHKPIIIGKGGSKLKKISQYARQDIEAFLQSKVYIRLWVKVKEEWRDNQSLLKELGYKNMK.

The region spanning 3 to 170 (KSGFVTIVGR…KELMFKYIPE (168 aa)) is the Era-type G domain. Positions 11–18 (GRPNVGKS) are G1. Residue 11–18 (GRPNVGKS) participates in GTP binding. The G2 stretch occupies residues 37 to 41 (QTTRN). Residues 58–61 (DTPG) are G3. Residues 58-62 (DTPGI) and 120-123 (NKID) each bind GTP. A G4 region spans residues 120 to 123 (NKID). The interval 149–151 (ISA) is G5. The 78-residue stretch at 201–278 (LSEEVPHGIA…YIRLWVKVKE (78 aa)) folds into the KH type-2 domain.

This sequence belongs to the TRAFAC class TrmE-Era-EngA-EngB-Septin-like GTPase superfamily. Era GTPase family. In terms of assembly, monomer.

It is found in the cytoplasm. The protein resides in the cell membrane. Its function is as follows. An essential GTPase that binds both GDP and GTP, with rapid nucleotide exchange. Plays a role in 16S rRNA processing and 30S ribosomal subunit biogenesis and possibly also in cell cycle regulation and energy metabolism. The chain is GTPase Era from Clostridium botulinum (strain Loch Maree / Type A3).